Here is a 505-residue protein sequence, read N- to C-terminus: ATP synthase subunit alpha (505 aa).

170–177 (GDRQTGKT) contributes to the ATP binding site.

The protein belongs to the ATPase alpha/beta chains family. As to quaternary structure, F-type ATPases have 2 components, CF(1) - the catalytic core - and CF(0) - the membrane proton channel. CF(1) has five subunits: alpha(3), beta(3), gamma(1), delta(1), epsilon(1). CF(0) has four main subunits: a(1), b(1), b'(1) and c(9-12).

It localises to the cellular thylakoid membrane. The catalysed reaction is ATP + H2O + 4 H(+)(in) = ADP + phosphate + 5 H(+)(out). In terms of biological role, produces ATP from ADP in the presence of a proton gradient across the membrane. The alpha chain is a regulatory subunit. The chain is ATP synthase subunit alpha from Prochlorococcus marinus subsp. pastoris (strain CCMP1986 / NIES-2087 / MED4).